Consider the following 362-residue polypeptide: Probable peptidyl-prolyl cis-trans isomerase C27F1.06c (362 aa).

Ser-69 bears the Phosphoserine mark. Residues 144 to 274 (DEFSSDEEEM…KVKGDGPAAK (131 aa)) form a disordered region. Acidic residues-rich tracts occupy residues 146–167 (FSSD…EEEE) and 175–189 (LNSD…EEEI). Position 177 is a phosphoserine (Ser-177). Positions 190–218 (LEKPVPKDEVAEKHSKDKLKKEEKEKKTA) are enriched in basic and acidic residues. The 87-residue stretch at 276–362 (KKRVSMRYIG…VFDVKLLAVN (87 aa)) folds into the PPIase FKBP-type domain.

This sequence belongs to the FKBP-type PPIase family. FKBP3/4 subfamily.

It carries out the reaction [protein]-peptidylproline (omega=180) = [protein]-peptidylproline (omega=0). In terms of biological role, PPIases accelerate the folding of proteins. It catalyzes the cis-trans isomerization of proline imidic peptide bonds in oligopeptides. The protein is Probable peptidyl-prolyl cis-trans isomerase C27F1.06c of Schizosaccharomyces pombe (strain 972 / ATCC 24843) (Fission yeast).